Here is a 522-residue protein sequence, read N- to C-terminus: 3-octaprenyl-4-hydroxybenzoate carboxy-lyase (522 aa).

N181 is a binding site for Mn(2+). Residues 184 to 186 (IYR), 198 to 200 (RWL), and 203 to 204 (RG) each bind prenylated FMN. E247 contributes to the Mn(2+) binding site. D322 serves as the catalytic Proton donor.

Belongs to the UbiD family. Homohexamer. Prenylated FMN serves as cofactor. The cofactor is Mn(2+).

It localises to the cell membrane. The enzyme catalyses a 4-hydroxy-3-(all-trans-polyprenyl)benzoate + H(+) = a 2-(all-trans-polyprenyl)phenol + CO2. The protein operates within cofactor biosynthesis; ubiquinone biosynthesis. Its function is as follows. Catalyzes the decarboxylation of 3-octaprenyl-4-hydroxy benzoate to 2-octaprenylphenol, an intermediate step in ubiquinone biosynthesis. In Paraburkholderia xenovorans (strain LB400), this protein is 3-octaprenyl-4-hydroxybenzoate carboxy-lyase.